The primary structure comprises 356 residues: GDP-mannose:di-myo-inositol-1,3'-phosphate beta-1,2-mannosyltransferase (356 aa).

This sequence belongs to the MDIP synthase family. Mg(2+) is required as a cofactor.

The enzyme catalyses bis(myo-inositol) 1,3'-phosphate + GDP-alpha-D-mannose = 2-O-(beta-D-mannosyl)-bis(myo-inositol) 1,3'-phosphate + GDP + H(+). The catalysed reaction is 2-O-(beta-D-mannosyl)-bis(myo-inositol) 1,3'-phosphate + GDP-alpha-D-mannose = 2-O-(beta-D-mannosyl-(1-&gt;2)-beta-D-mannosyl)-bis(myo-inositol) 1,3'-phosphate + GDP + H(+). It catalyses the reaction bis(myo-inositol) 1,3'-phosphate + 2 GDP-alpha-D-mannose = 2-O-(beta-D-mannosyl-(1-&gt;2)-beta-D-mannosyl)-bis(myo-inositol) 1,3'-phosphate + 2 GDP + 2 H(+). Catalyzes the transfer of the mannosyl group from GDP-mannose to di-myo-inositol-1,3'-phosphate (DIP), producing mannosyl-di-myo-inositol phosphate (MDIP). Can also use MDIP as an acceptor of a second mannose residue, yielding di-mannosyl-di-myo-inositol phosphate (MMDIP). The chain is GDP-mannose:di-myo-inositol-1,3'-phosphate beta-1,2-mannosyltransferase from Aquifex aeolicus (strain VF5).